The primary structure comprises 571 residues: Proline--tRNA ligase (571 aa).

The protein belongs to the class-II aminoacyl-tRNA synthetase family. ProS type 1 subfamily. In terms of assembly, homodimer.

Its subcellular location is the cytoplasm. It carries out the reaction tRNA(Pro) + L-proline + ATP = L-prolyl-tRNA(Pro) + AMP + diphosphate. Functionally, catalyzes the attachment of proline to tRNA(Pro) in a two-step reaction: proline is first activated by ATP to form Pro-AMP and then transferred to the acceptor end of tRNA(Pro). As ProRS can inadvertently accommodate and process non-cognate amino acids such as alanine and cysteine, to avoid such errors it has two additional distinct editing activities against alanine. One activity is designated as 'pretransfer' editing and involves the tRNA(Pro)-independent hydrolysis of activated Ala-AMP. The other activity is designated 'posttransfer' editing and involves deacylation of mischarged Ala-tRNA(Pro). The misacylated Cys-tRNA(Pro) is not edited by ProRS. The sequence is that of Proline--tRNA ligase from Actinobacillus pleuropneumoniae serotype 3 (strain JL03).